The primary structure comprises 249 residues: Imidazole glycerol phosphate synthase subunit HisF (249 aa).

Catalysis depends on residues aspartate 11 and aspartate 130.

Belongs to the HisA/HisF family. In terms of assembly, heterodimer of HisH and HisF.

It is found in the cytoplasm. It catalyses the reaction 5-[(5-phospho-1-deoxy-D-ribulos-1-ylimino)methylamino]-1-(5-phospho-beta-D-ribosyl)imidazole-4-carboxamide + L-glutamine = D-erythro-1-(imidazol-4-yl)glycerol 3-phosphate + 5-amino-1-(5-phospho-beta-D-ribosyl)imidazole-4-carboxamide + L-glutamate + H(+). The protein operates within amino-acid biosynthesis; L-histidine biosynthesis; L-histidine from 5-phospho-alpha-D-ribose 1-diphosphate: step 5/9. Functionally, IGPS catalyzes the conversion of PRFAR and glutamine to IGP, AICAR and glutamate. The HisF subunit catalyzes the cyclization activity that produces IGP and AICAR from PRFAR using the ammonia provided by the HisH subunit. This chain is Imidazole glycerol phosphate synthase subunit HisF, found in Exiguobacterium sibiricum (strain DSM 17290 / CCUG 55495 / CIP 109462 / JCM 13490 / 255-15).